Here is an 80-residue protein sequence, read N- to C-terminus: Putative membrane protein insertion efficiency factor (80 aa).

The protein belongs to the UPF0161 family.

Its subcellular location is the cell inner membrane. Its function is as follows. Could be involved in insertion of integral membrane proteins into the membrane. In Paracoccus denitrificans (strain Pd 1222), this protein is Putative membrane protein insertion efficiency factor.